The sequence spans 388 residues: 4-hydroxycoumarin synthase 2 (388 aa).

Cys159 is an active-site residue.

It belongs to the thiolase-like superfamily. Chalcone/stilbene synthases family. As to quaternary structure, homodimer.

The enzyme catalyses 2-hydroxybenzoyl-CoA + malonyl-CoA = 4-hydroxycoumarin + CO2 + 2 CoA. Its function is as follows. Type III polyketide synthase involved preferentially in the biosynthesis of 4-hydroxycoumarin from salicoyl-CoA. Can also use benzoyl-CoA and malonyl-CoA to produce 3,5-dihydroxybiphenyl as a major product and benzoyldiacetic acid lactone as a minor side product. Can also use m-hydroxybenzoyl-CoA as substrate, producing m-hydroxybenzoyl diacetic acid lactone as a derailment product. No activity with p-hydroxybenzoyl-CoA, CoA-linked cinnamic acids or acetyl-CoA. The sequence is that of 4-hydroxycoumarin synthase 2 (BIS3) from Sorbus aucuparia (European mountain ash).